The following is a 374-amino-acid chain: All-trans-retinol dehydrogenase [NAD(+)] ADH7 (374 aa).

Zn(2+)-binding residues include Cys-47, His-68, Cys-98, Cys-101, Cys-104, Cys-112, and Cys-174. Residues 199 to 204, Asp-223, Lys-228, 292 to 294, and Arg-369 each bind NAD(+); these read GLGGVG and VGA.

Belongs to the zinc-containing alcohol dehydrogenase family. Class-IV subfamily. In terms of assembly, homodimer. Zn(2+) is required as a cofactor. In terms of tissue distribution, high expression in the stomach mucosa. Lower expression in eye, thymus, skin and ovary. Very low expression in small intestine, liver and uterus.

The protein localises to the cytoplasm. The enzyme catalyses a primary alcohol + NAD(+) = an aldehyde + NADH + H(+). It carries out the reaction 10-hydroxydecanoate + NAD(+) = 10-oxodecanoate + NADH + H(+). The catalysed reaction is all-trans-retinol + NAD(+) = all-trans-retinal + NADH + H(+). It catalyses the reaction 9-cis-retinol + NAD(+) = 9-cis-retinal + NADH + H(+). The enzyme catalyses all-trans-3,4-didehydroretinol + NAD(+) = all-trans-3,4-didehydroretinal + NADH + H(+). It carries out the reaction all-trans-4-hydroxyretinol + NAD(+) = all-trans-4-hydroxyretinal + NADH + H(+). The catalysed reaction is all-trans-4-oxoretinol + NAD(+) = all-trans-4-oxoretinal + NADH + H(+). It catalyses the reaction 12-hydroxydodecanoate + NAD(+) = 12-oxododecanoate + NADH + H(+). The enzyme catalyses 16-hydroxyhexadecanoate + NAD(+) = 16-oxohexadecanoate + NADH + H(+). It carries out the reaction hexan-1-ol + NAD(+) = hexanal + NADH + H(+). The catalysed reaction is (E)-hex-2-en-1-ol + NAD(+) = (E)-hex-2-enal + NADH + H(+). It catalyses the reaction (E)-4-hydroxynon-2-en-1-ol + NAD(+) = (E)-4-hydroxynon-2-enal + NADH + H(+). Retinol oxidation is inhibited by the detergent Tween 80. Ethanol inhibits both all-trans-retinol and 9-cis-retinol oxidation. 13-cis-retinol is an effective competitive inhibitor of the 9-cis-retinol oxidation. All-trans-retinoic acid is a powerful inhibitor of all-trans-retinol oxidation. 13-cis-retinoic acid is a powerful inhibitor of all-trans-retinol oxidation. Cimetidine competitively inhibited ethanol oxidation. Its function is as follows. Catalyzes the NAD-dependent oxidation of all-trans-retinol, alcohol, aldehyde and omega-hydroxy fatty acids and their derivatives. Oxidizes preferentially all trans-retinol, all-trans-4-hydroxyretinol, 9-cis-retinol, 2-hexenol, and long chain omega-hydroxy fatty acids such as juniperic acid. In vitro can also catalyze the NADH-dependent reduction of all-trans-retinal and aldehydes and their derivatives. Reduces preferentially all trans-retinal, all-trans-4-oxoretinal and hexanal. Catalyzes in the oxidative direction with higher efficiency. Therefore may participate in retinoid metabolism, fatty acid omega-oxidation, and elimination of cytotoxic aldehydes produced by lipid peroxidation. The sequence is that of All-trans-retinol dehydrogenase [NAD(+)] ADH7 (Adh7) from Mus musculus (Mouse).